The sequence spans 338 residues: Glyceraldehyde-3-phosphate dehydrogenase (338 aa).

Residues 11-12 (TI) and Gly109 contribute to the NAD(+) site. 138-140 (SCN) is a binding site for D-glyceraldehyde 3-phosphate. Residue Cys139 is the Nucleophile of the active site. Arg167 lines the NAD(+) pocket. Residues Thr169 and 192 to 193 (HA) each bind D-glyceraldehyde 3-phosphate. An NAD(+)-binding site is contributed by Gln299.

This sequence belongs to the glyceraldehyde-3-phosphate dehydrogenase family. Homotetramer.

The protein localises to the cytoplasm. The enzyme catalyses D-glyceraldehyde 3-phosphate + phosphate + NADP(+) = (2R)-3-phospho-glyceroyl phosphate + NADPH + H(+). It carries out the reaction D-glyceraldehyde 3-phosphate + phosphate + NAD(+) = (2R)-3-phospho-glyceroyl phosphate + NADH + H(+). The protein operates within carbohydrate degradation; glycolysis; pyruvate from D-glyceraldehyde 3-phosphate: step 1/5. In Thermoplasma volcanium (strain ATCC 51530 / DSM 4299 / JCM 9571 / NBRC 15438 / GSS1), this protein is Glyceraldehyde-3-phosphate dehydrogenase.